We begin with the raw amino-acid sequence, 281 residues long: Arylamine N-acetyltransferase (281 aa).

Cys69 serves as the catalytic Acyl-thioester intermediate. Residues His107 and Asp122 contribute to the active site. Residues Lys214 and Lys281 each carry the N6-acetyllysine modification.

It belongs to the arylamine N-acetyltransferase family. As to quaternary structure, homodimer. Acetylated on Lys-214 and Lys-281. Deacetylated by CobB.

The protein localises to the cytoplasm. It carries out the reaction an arylamine + acetyl-CoA = an N-acetylarylamine + CoA. The enzyme catalyses an N-hydroxyarylamine + acetyl-CoA = an N-acetoxyarylamine + CoA. Inhibited by salicylic acid, acetylsalicylic acid, 2,6-dichrolo-4-nitrophenol, N-ethylmaleimide and iodoacetamide. Functionally, catalyzes the acetyl-CoA-dependent N-acetylation of aromatic amines, and, probably, the O-acetylation of N-hydroxyarylamines. In vitro, catalyzes the N-acetylation of various arylamines such as aminobenzoic acid, aminophenol, aminotoluene, phenetidine, anisidine, aniline, isoniazid and 2-amino-fluorene. N-hydroxyarylamine O-acetyltransferase activity has not been assayed directly, however, NhoA activity is required for the mutagenicity of nitroaromatic compounds, suggesting that it also has O-acetyltransferase activity. The chain is Arylamine N-acetyltransferase (nhoA) from Escherichia coli (strain K12).